We begin with the raw amino-acid sequence, 273 residues long: Glutamate racemase (273 aa).

Residues 11–12 (DS) and 43–44 (YG) each bind substrate. Residue cysteine 74 is the Proton donor/acceptor of the active site. 75 to 76 (NT) lines the substrate pocket. The active-site Proton donor/acceptor is cysteine 185. Residue 186–187 (TH) participates in substrate binding.

Belongs to the aspartate/glutamate racemases family.

It catalyses the reaction L-glutamate = D-glutamate. It functions in the pathway cell wall biogenesis; peptidoglycan biosynthesis. Functionally, provides the (R)-glutamate required for cell wall biosynthesis. The chain is Glutamate racemase from Lactiplantibacillus plantarum (strain ATCC BAA-793 / NCIMB 8826 / WCFS1) (Lactobacillus plantarum).